Consider the following 250-residue polypeptide: MEVERDQHISPPSLMAKTIPIIDLSNLDEELVAHAVVKGSEEWGIFHVVNHGIPMDLIQRLKDVGTQFFELPETEKKAVAKQDGSKDFEGYTTNLKYVKGEVWTENLFHRIWPPTCINFDYWPKNPPQYREVIEEYTKETKKLSERILGYLSEGLGLPSEALIQGLGGESTEYVMRINNYPPDPKPDLTLGVPEHTDIIGITIIITNEVPGLQIFKDDHWLDVHYIPSSITVNIGDQIMAEQWKVQECVA.

The Fe2OG dioxygenase domain maps to 171–250 (TEYVMRINNY…EQWKVQECVA (80 aa)). Residues H195 and D197 each coordinate Fe cation.

The protein belongs to the iron/ascorbate-dependent oxidoreductase family.

The chain is Putative inactive flavonol synthase 2 (FLS2) from Arabidopsis thaliana (Mouse-ear cress).